Consider the following 93-residue polypeptide: N-acetyl-S-hydroxy-L-cysteine reductase (93 aa).

The Glutaredoxin domain occupies Met1–Arg93. Cysteines 15 and 18 form a disulfide.

The protein belongs to the glutaredoxin family.

It carries out the reaction N-acetyl-S-hydroxy-L-cysteine + AH2 = N-acetyl-L-cysteine + A + H2O. Its pathway is amino-acid metabolism. Involved in a cysteine salvage pathway from S-alkylcysteine. Catalyzes the reduction of N-acetyl-S-hydroxy-L-cysteine (N-acetyl-L-cysteine sulfenic acid) to N-acetyl-L-cysteine. This pathway is likely important in the catabolism of alkylated cysteine generated by proteolysis of alkylated glutathione formed in the detoxification of a wide range of electrophiles. This chain is N-acetyl-S-hydroxy-L-cysteine reductase, found in Bacillus subtilis (strain 168).